We begin with the raw amino-acid sequence, 440 residues long: C-terminal-binding protein 1 (440 aa).

NAD(+) contacts are provided by residues Ser-100, Ile-180 to Val-185, Asp-204, Cys-237 to Asn-243, Thr-264 to Arg-266, and Asp-290. Residue Arg-266 is part of the active site. Residue Glu-295 is part of the active site. His-315 serves as the catalytic Proton donor. Residue His-315–Trp-318 participates in NAD(+) binding. The interval His-409–Leu-440 is disordered. The span at Pro-429–Leu-440 shows a compositional bias: basic and acidic residues.

Belongs to the D-isomer specific 2-hydroxyacid dehydrogenase family. It depends on NAD(+) as a cofactor.

The protein localises to the nucleus. Corepressor targeting diverse transcription regulators. Has dehydrogenase activity. The protein is C-terminal-binding protein 1 (ctbp1) of Xenopus laevis (African clawed frog).